An 84-amino-acid polypeptide reads, in one-letter code: Large ribosomal subunit protein bL31 (84 aa).

Zn(2+) contacts are provided by Cys16, Cys18, Cys38, and Cys41.

This sequence belongs to the bacterial ribosomal protein bL31 family. Type A subfamily. In terms of assembly, part of the 50S ribosomal subunit. Requires Zn(2+) as cofactor.

Its function is as follows. Binds the 23S rRNA. In Mycobacterium leprae (strain Br4923), this protein is Large ribosomal subunit protein bL31.